We begin with the raw amino-acid sequence, 446 residues long: Phosphoglucosamine mutase (446 aa).

The active-site Phosphoserine intermediate is serine 99. Mg(2+) contacts are provided by serine 99, aspartate 242, aspartate 244, and aspartate 246. Position 99 is a phosphoserine (serine 99).

This sequence belongs to the phosphohexose mutase family. Requires Mg(2+) as cofactor. In terms of processing, activated by phosphorylation.

It catalyses the reaction alpha-D-glucosamine 1-phosphate = D-glucosamine 6-phosphate. Functionally, catalyzes the conversion of glucosamine-6-phosphate to glucosamine-1-phosphate. The protein is Phosphoglucosamine mutase of Campylobacter curvus (strain 525.92).